Reading from the N-terminus, the 609-residue chain is Spore-specific protein YSW1 (609 aa).

Residues 1–24 are disordered; sequence MSSLADTVEGSEAKRGRFSNNALT. A phosphoserine mark is found at Ser-159 and Ser-160. Positions 162–225 are disordered; the sequence is DENESHFTDA…DDEFSPATPP (64 aa). Residues 169–179 are compositionally biased toward polar residues; it reads TDANSHVMQSK. Basic and acidic residues predominate over residues 200–209; that stretch reads LKKEYEKSFE. Acidic residues predominate over residues 210–219; the sequence is EYSDDSDDEF.

In Saccharomyces cerevisiae (strain ATCC 204508 / S288c) (Baker's yeast), this protein is Spore-specific protein YSW1 (YSW1).